The primary structure comprises 156 residues: ATP synthase subunit b (156 aa).

Residues 5–25 traverse the membrane as a helical segment; it reads LTLIGQAIAFAIFVAFCMKFV.

The protein belongs to the ATPase B chain family. In terms of assembly, F-type ATPases have 2 components, F(1) - the catalytic core - and F(0) - the membrane proton channel. F(1) has five subunits: alpha(3), beta(3), gamma(1), delta(1), epsilon(1). F(0) has three main subunits: a(1), b(2) and c(10-14). The alpha and beta chains form an alternating ring which encloses part of the gamma chain. F(1) is attached to F(0) by a central stalk formed by the gamma and epsilon chains, while a peripheral stalk is formed by the delta and b chains.

It is found in the cell inner membrane. Its function is as follows. F(1)F(0) ATP synthase produces ATP from ADP in the presence of a proton or sodium gradient. F-type ATPases consist of two structural domains, F(1) containing the extramembraneous catalytic core and F(0) containing the membrane proton channel, linked together by a central stalk and a peripheral stalk. During catalysis, ATP synthesis in the catalytic domain of F(1) is coupled via a rotary mechanism of the central stalk subunits to proton translocation. Component of the F(0) channel, it forms part of the peripheral stalk, linking F(1) to F(0). The sequence is that of ATP synthase subunit b from Acinetobacter baylyi (strain ATCC 33305 / BD413 / ADP1).